We begin with the raw amino-acid sequence, 133 residues long: Small ribosomal subunit protein uS8 (133 aa).

It belongs to the universal ribosomal protein uS8 family. Part of the 30S ribosomal subunit. Contacts proteins S5 and S12.

One of the primary rRNA binding proteins, it binds directly to 16S rRNA central domain where it helps coordinate assembly of the platform of the 30S subunit. In Chlamydia trachomatis serovar A (strain ATCC VR-571B / DSM 19440 / HAR-13), this protein is Small ribosomal subunit protein uS8.